A 132-amino-acid chain; its full sequence is Putative RNase AF_2433 (132 aa).

Active-site residues include Arg-90 and His-95. Positions 90–97 (RNWLVHRY) match the RX(4)HXY motif motif. At Tyr-97 the chain carries O-di-AMP-tyrosine.

It belongs to the HepT RNase toxin family. Homodimer, probably forms a complex with cognate antitoxin AF_2432. Post-translationally, modified by cognate antitoxin AF_2432; probably at least 2 successive AMPylation events occur on Tyr-97.

Functionally, probable toxic component of a putative type VII toxin-antitoxin (TA) system, probably an RNase. Probably neutralized by cognate antitoxin AF_2432. Neutralization may be due to AMPylation by AF_2432. The chain is Putative RNase AF_2433 from Archaeoglobus fulgidus (strain ATCC 49558 / DSM 4304 / JCM 9628 / NBRC 100126 / VC-16).